Reading from the N-terminus, the 388-residue chain is Dipeptidase verJ (388 aa).

Residues histidine 29, aspartate 31, and glutamate 142 each contribute to the Zn(2+) site. Residues histidine 169, arginine 243, and aspartate 300 each coordinate substrate.

Belongs to the metallo-dependent hydrolases superfamily. Peptidase M19 family. It depends on Zn(2+) as a cofactor.

The enzyme catalyses an L-aminoacyl-L-amino acid + H2O = 2 an L-alpha-amino acid. It participates in mycotoxin biosynthesis. Functionally, dipeptidase; part of the gene cluster that mediates the biosynthesis of 11'-deoxyverticillin A, one of the dimeric epipolythiodioxopiperazines (ETPs) from the verticillin family that act as mycotoxins. 11'-deoxyverticillin A is required for normal conidiation. The nonribosomal peptide synthetase verP is speculated to be responsible for condensation of amino acids to form the carbon skeleton of verticillin, whereas the cluster-specific tailoring enzymes are involved in further modifications leading to the production of 11'-deoxyverticillin A. This chain is Dipeptidase verJ, found in Clonostachys rogersoniana.